The chain runs to 425 residues: Aspyridones cluster regulator (425 aa).

The segment at residues 100–127 is a DNA-binding region (zn(2)-C6 fungal-type); that stretch reads CVDCRASKTRCTGEPEGCKRCTFRKRPC. A disordered region spans residues 132–159; it reads LRRSNTTQHGEQIEASSSTFTMSDEQGS. Residues 133-157 are compositionally biased toward polar residues; sequence RRSNTTQHGEQIEASSSTFTMSDEQ.

It is found in the nucleus. Functionally, transcription factor involved in regulation of gene cluster that mediates the biosynthesis of aphidicolin. This is Aspyridones cluster regulator (TF) from Neocamarosporium betae (Beet black rot fungus).